The chain runs to 435 residues: Homoserine dehydrogenase (435 aa).

4 residues coordinate NADPH: T13, V14, R43, and K105. NAD(+) is bound at residue V14. 3 residues coordinate NADP(+): V14, R43, and K105. Na(+)-binding residues include E129, V132, G134, and I136. Residue K204 is the Proton donor of the active site. Disordered regions lie at residues 255-274 (ARGV…TPDR) and 377-402 (RCDD…PDHV). Composition is skewed to basic and acidic residues over residues 262–274 (RAPD…TPDR) and 377–391 (RCDD…AERR).

The protein belongs to the homoserine dehydrogenase family. The cofactor is a metal cation.

The catalysed reaction is L-homoserine + NADP(+) = L-aspartate 4-semialdehyde + NADPH + H(+). It carries out the reaction L-homoserine + NAD(+) = L-aspartate 4-semialdehyde + NADH + H(+). Its pathway is amino-acid biosynthesis; L-methionine biosynthesis via de novo pathway; L-homoserine from L-aspartate: step 3/3. It participates in amino-acid biosynthesis; L-threonine biosynthesis; L-threonine from L-aspartate: step 3/5. Functionally, catalyzes the conversion of L-aspartate-beta-semialdehyde (L-Asa) to L-homoserine (L-Hse), the third step in the biosynthesis of threonine and methionine from aspartate. The polypeptide is Homoserine dehydrogenase (hom) (Methylobacillus glycogenes).